Reading from the N-terminus, the 121-residue chain is Large ribosomal subunit protein uL14 (121 aa).

This sequence belongs to the universal ribosomal protein uL14 family. As to quaternary structure, part of the 50S ribosomal subunit. Forms a cluster with proteins L3 and L19. In the 70S ribosome, L14 and L19 interact and together make contacts with the 16S rRNA in bridges B5 and B8.

Binds to 23S rRNA. Forms part of two intersubunit bridges in the 70S ribosome. The protein is Large ribosomal subunit protein uL14 of Mycoplasmopsis synoviae (strain 53) (Mycoplasma synoviae).